The sequence spans 707 residues: Ribosome biogenesis protein ENP2 (707 aa).

WD repeat units lie at residues 54–94 (EFSE…LKFD), 178–217 (LDTEGVNHVSINEVNGLLAAGTETNVVEFWDPRSRSRVSK), 226–265 (NRPFQVTTTSFRNDGLTFACGTSNGYSYIYDLRTSEPSII), 269–310 (GYGF…AYAS), and 312–351 (EPSVDINDIEHVPGTGMFFTANESIPMHTYYIPSLGPSPR). The interval 523–707 (LTAAEESDEE…RASKNAFRGM (185 aa)) is disordered. At serine 529 the chain carries Phosphoserine. Over residues 532-544 (ERIAMKDGRGHYD) the composition is skewed to basic and acidic residues. The segment covering 545–558 (YEDEESDEEESDDE) has biased composition (acidic residues). Serine 550 and serine 555 each carry phosphoserine. Basic and acidic residues-rich tracts occupy residues 559–598 (TNQKSNKEELSEKDLRKMEKQKALIERRKKEKEQSERFMN), 629–647 (ENGKKSNESILRRNQRGEA), 659–671 (KDGNYKSRRHDNS), and 680–697 (NGNKKDNGRSKPRFENRR).

This sequence belongs to the WD repeat NOL10/ENP2 family. As to quaternary structure, component of the 90S pre-ribosomes.

It is found in the nucleus. It localises to the nucleolus. May be involved in rRNA-processing and ribosome biosynthesis. This is Ribosome biogenesis protein ENP2 (ENP2) from Saccharomyces cerevisiae (strain ATCC 204508 / S288c) (Baker's yeast).